Here is a 175-residue protein sequence, read N- to C-terminus: Interferon a3 (175 aa).

Residues 1 to 23 (MYTMQSWSCIFLIICSMQSVCHC) form the signal peptide. Residues Cys24 and Cys120 are joined by a disulfide bond.

Belongs to the alpha/beta interferon family. As to expression, isoform 1 and isoform 2 are expressed in several tissues, including gill, spleen, intestine, kidney and skin.

The protein resides in the secreted. Its subcellular location is the cytoplasm. The protein localises to the cytosol. Functionally, key player in antiviral response. Induces expression of TLRs, including that of TLR3, TLR9 and TLR8a1, and that of cytosolic pattern recognition receptors, including RIGI, IFIH1/MDA5 and DHX58/LGP2. Also induces MX1 and its own expression. In the presence of intracellular IFNAR2 (iIFNAR2) and IFNAR1B, intracellular isoform 3 may mediate STAT1 and STAT2 phosphorylation and induction of EIF2AK2, MX1 and RSAD2. The protein is Interferon a3 of Oncorhynchus mykiss (Rainbow trout).